A 279-amino-acid chain; its full sequence is tRNA uridine(34) hydroxylase (279 aa).

The 96-residue stretch at 126–221 folds into the Rhodanese domain; that stretch reads TKPGMHVIDT…YLQSVKGADS (96 aa). The active-site Cysteine persulfide intermediate is C181.

It belongs to the TrhO family.

The enzyme catalyses uridine(34) in tRNA + AH2 + O2 = 5-hydroxyuridine(34) in tRNA + A + H2O. Catalyzes oxygen-dependent 5-hydroxyuridine (ho5U) modification at position 34 in tRNAs. The sequence is that of tRNA uridine(34) hydroxylase from Anaplasma phagocytophilum (strain HZ).